We begin with the raw amino-acid sequence, 156 residues long: Ribosomal RNA large subunit methyltransferase H (156 aa).

Residues Leu-73, Gly-104, and 123 to 128 (ISSMTL) contribute to the S-adenosyl-L-methionine site.

The protein belongs to the RNA methyltransferase RlmH family. Homodimer.

The protein localises to the cytoplasm. It carries out the reaction pseudouridine(1915) in 23S rRNA + S-adenosyl-L-methionine = N(3)-methylpseudouridine(1915) in 23S rRNA + S-adenosyl-L-homocysteine + H(+). In terms of biological role, specifically methylates the pseudouridine at position 1915 (m3Psi1915) in 23S rRNA. The polypeptide is Ribosomal RNA large subunit methyltransferase H (Burkholderia lata (strain ATCC 17760 / DSM 23089 / LMG 22485 / NCIMB 9086 / R18194 / 383)).